A 101-amino-acid polypeptide reads, in one-letter code: Putative pterin-4-alpha-carbinolamine dehydratase (101 aa).

It belongs to the pterin-4-alpha-carbinolamine dehydratase family.

It catalyses the reaction (4aS,6R)-4a-hydroxy-L-erythro-5,6,7,8-tetrahydrobiopterin = (6R)-L-erythro-6,7-dihydrobiopterin + H2O. The chain is Putative pterin-4-alpha-carbinolamine dehydratase (phhB) from Ralstonia nicotianae (strain ATCC BAA-1114 / GMI1000) (Ralstonia solanacearum).